The primary structure comprises 287 residues: Thioredoxin-related transmembrane protein 2 (287 aa).

The first 13 residues, 1-13 (MAVLAPLLAVLYA), serve as a signal peptide directing secretion. Topologically, residues 14–112 (APGLLRWVSQ…ILFFRLDLRM (99 aa)) are extracellular. Residues 113-133 (GLLYITLCIVFLMTCKPPLYL) form a helical membrane-spanning segment. At 134–287 (GPEHIKYFSD…NEWNDGKKDQ (154 aa)) the chain is on the cytoplasmic side. The Thioredoxin domain occupies 137 to 209 (HIKYFSDKTL…PEVSCRYSIS (73 aa)). Positions 284-287 (KKDQ) match the Di-lysine motif motif.

As to quaternary structure, monomer. Homodimer; disulfide-linked. Occurs in both reduced and oxidized monomeric form. Oxidative conditions increase homodimerization.

It is found in the endoplasmic reticulum membrane. The protein resides in the mitochondrion membrane. Functionally, endoplasmic reticulum and mitochondria-associated protein that probably functions as a regulator of cellular redox state and thereby regulates protein post-translational modification, protein folding and mitochondrial activity. The sequence is that of Thioredoxin-related transmembrane protein 2 (tmx2) from Xenopus laevis (African clawed frog).